The primary structure comprises 262 residues: MFLFSRKTRTPISTYSDSYRAPTSIKEVYKDPPLCAWEANKFLTPGLTHTMERHVDPEALQKMAKCAVQDYTYRGSISGHPYLPEKYWLSQEEADKCSPNYLGSDWYNTWRMEPYNSSCCNKYTTYLPRLPKEARMETAVRGMPLECPPRPERLNAYEREVMVNMLNSLSRNQQLPRITPRCGCVDPLPGRLPFHGYESACSGRHYCLRGMDYYASGAPCTDRRLRPWCREQPTMCTSLRAPARNAVCCYNSPAVILPISEP.

It belongs to the SPMIP6 family. In terms of assembly, microtubule inner protein component of sperm flagellar doublet microtubules. Interacts with alpha-tubulin. As to expression, expressed in testis. Strongly expressed in ciliated epithelial cells with lower levels in goblet cells (at protein level).

It is found in the cytoplasm. Its subcellular location is the cytoskeleton. The protein resides in the nucleus. It localises to the mitochondrion. The protein localises to the flagellum axoneme. May participate in intramanchette transport and midpiece formation of the sperm tail. May play a potential role in somatic cell proliferation. The sequence is that of Sperm microtubule inner protein 6 from Homo sapiens (Human).